We begin with the raw amino-acid sequence, 385 residues long: MAAHQGMAAATAADRFCLPRMAAAAAAASQVENWGDSGVIVSSPFTDDTSTDLDDSADKHHLHALVGGGDGGDDAGEQRGADSSAVSKERRGDQKMQRRLAQNREAARKSRMRKKAYIQQLESSRSKLMHLEQELQRARQQGIFIATGGSGDHGHSIGGNGTLAFDLEYARWLDEHQRHINDLRVALNAQMSDDELCELVDAVMMHYDQVFRLKSFATKSDVFHVLSGMWMSPAERFFMWLGGFRSSELLKVLASHLEPLTDQQLMGICNLQQSSQQAEDALSQGMEALQQTLGDTLVSAAATVVSGGGGADNVTNYMGQMAIAMAKLTTLENFLRQADLLRHQTLQQMHRILTTRQAARALLVISDYFSRLRALSSLWLARPRD.

Positions 62–113 are disordered; the sequence is LHALVGGGDGGDDAGEQRGADSSAVSKERRGDQKMQRRLAQNREAARKSRMR. A compositionally biased stretch (basic and acidic residues) spans 87-96; sequence SKERRGDQKM. The 45-residue stretch at 93–137 folds into the bZIP domain; it reads DQKMQRRLAQNREAARKSRMRKKAYIQQLESSRSKLMHLEQELQR. The basic motif stretch occupies residues 95-115; that stretch reads KMQRRLAQNREAARKSRMRKK. The leucine-zipper stretch occupies residues 121 to 135; sequence LESSRSKLMHLEQEL. The DOG1 domain occupies 162-382; it reads TLAFDLEYAR…RALSSLWLAR (221 aa).

It belongs to the bZIP family. As to quaternary structure, interacts with NPR1/NH1, NPR2/NH2 and NPR3/NH3.

The protein localises to the nucleus. Transcriptional regulator involved in defense response. The protein is Transcription factor TGAL3 of Oryza sativa subsp. japonica (Rice).